Reading from the N-terminus, the 231-residue chain is L-ribulose-5-phosphate 4-epimerase (231 aa).

Substrate-binding positions include Gly-27–Asn-28, Ser-44–Gly-45, and Ser-74–Ser-75. Residues Asp-76, His-95, and His-97 each contribute to the Zn(2+) site. Asp-120 (proton donor/acceptor) is an active-site residue. Zn(2+) is bound at residue His-171. Residue Tyr-229 is the Proton donor/acceptor of the active site.

It belongs to the aldolase class II family. AraD/FucA subfamily. In terms of assembly, homotetramer. Zn(2+) serves as cofactor.

It carries out the reaction L-ribulose 5-phosphate = D-xylulose 5-phosphate. It participates in carbohydrate degradation; L-arabinose degradation via L-ribulose; D-xylulose 5-phosphate from L-arabinose (bacterial route): step 3/3. Involved in the degradation of L-arabinose. Catalyzes the interconversion of L-ribulose 5-phosphate (LRu5P) and D-xylulose 5-phosphate (D-Xu5P) via a retroaldol/aldol mechanism (carbon-carbon bond cleavage analogous to a class II aldolase reaction). This chain is L-ribulose-5-phosphate 4-epimerase, found in Salmonella typhimurium (strain LT2 / SGSC1412 / ATCC 700720).